The chain runs to 417 residues: UDP-N-acetylmuramoylalanine--D-glutamate ligase (417 aa).

104–110 (GSNGKST) is a binding site for ATP.

This sequence belongs to the MurCDEF family.

The protein localises to the cytoplasm. The enzyme catalyses UDP-N-acetyl-alpha-D-muramoyl-L-alanine + D-glutamate + ATP = UDP-N-acetyl-alpha-D-muramoyl-L-alanyl-D-glutamate + ADP + phosphate + H(+). It participates in cell wall biogenesis; peptidoglycan biosynthesis. Functionally, cell wall formation. Catalyzes the addition of glutamate to the nucleotide precursor UDP-N-acetylmuramoyl-L-alanine (UMA). The protein is UDP-N-acetylmuramoylalanine--D-glutamate ligase of Francisella tularensis subsp. novicida (strain U112).